Reading from the N-terminus, the 274-residue chain is Cytochrome b-c1 complex subunit Rieske, mitochondrial (274 aa).

Over 79-103 the chain is Mitochondrial matrix; sequence SHTDVRVPDFSEYRRLEVLDSTKSS. The helical transmembrane segment at 104–140 threads the bilayer; sequence RESSEARKGFSYLVTGVTTVGVAYAAKNVVTQFVSSM. Topologically, residues 141-274 are mitochondrial intermembrane; it reads SASADVLALA…FTSDDMVIVG (134 aa). The region spanning 187–272 is the Rieske domain; it reads EAAVELSQLR…YEFTSDDMVI (86 aa). Residues C217, H219, C236, H239, and S241 each contribute to the [2Fe-2S] cluster site. C222 and C238 are joined by a disulfide.

It belongs to the Rieske iron-sulfur protein family. In terms of assembly, component of the ubiquinol-cytochrome c oxidoreductase (cytochrome b-c1 complex, complex III, CIII), a multisubunit enzyme composed of 11 subunits. The complex is composed of 3 respiratory subunits cytochrome b, cytochrome c1 and Rieske protein UQCRFS1, 2 core protein subunits UQCRC1/QCR1 and UQCRC2/QCR2, and 6 low-molecular weight protein subunits UQCRH/QCR6, UQCRB/QCR7, UQCRQ/QCR8, UQCR10/QCR9, UQCR11/QCR10 and subunit 9, the cleavage product of Rieske protein UQCRFS1. The complex exists as an obligatory dimer and forms supercomplexes (SCs) in the inner mitochondrial membrane with NADH-ubiquinone oxidoreductase (complex I, CI) and cytochrome c oxidase (complex IV, CIV), resulting in different assemblies (supercomplex SCI(1)III(2)IV(1) and megacomplex MCI(2)III(2)IV(2)). Incorporation of the Rieske protein UQCRFS1 is the penultimate step in complex III assembly. Interacts with TTC19, which is involved in the clearance of UQCRFS1 fragments. Component of the ubiquinol-cytochrome c oxidoreductase (cytochrome b-c1 complex, complex III, CIII). Subunit 9 corresponds to the mitochondrial targeting sequence (MTS) of Rieske protein UQCRFS1. It is retained after processing and incorporated inside complex III, where it remains bound to the complex and localizes between the 2 core subunits UQCRC1/QCR1 and UQCRC2/QCR2. [2Fe-2S] cluster is required as a cofactor. Proteolytic processing is necessary for the correct insertion of UQCRFS1 in the complex III dimer. Several fragments are generated during UQCRFS1 insertion, most probably due to the endogenous matrix-processing peptidase (MPP) activity of the 2 core protein subunits UQCRC1/QCR1 and UQCRC2/QCR2, which are homologous to the 2 mitochondrial-processing peptidase (MPP) subunits beta-MPP and alpha-MPP respectively. The action of the protease is also necessary for the clearance of the UQCRFS1 fragments.

The protein localises to the mitochondrion inner membrane. It carries out the reaction a quinol + 2 Fe(III)-[cytochrome c](out) = a quinone + 2 Fe(II)-[cytochrome c](out) + 2 H(+)(out). In terms of biological role, component of the ubiquinol-cytochrome c oxidoreductase, a multisubunit transmembrane complex that is part of the mitochondrial electron transport chain which drives oxidative phosphorylation. The respiratory chain contains 3 multisubunit complexes succinate dehydrogenase (complex II, CII), ubiquinol-cytochrome c oxidoreductase (cytochrome b-c1 complex, complex III, CIII) and cytochrome c oxidase (complex IV, CIV), that cooperate to transfer electrons derived from NADH and succinate to molecular oxygen, creating an electrochemical gradient over the inner membrane that drives transmembrane transport and the ATP synthase. The cytochrome b-c1 complex catalyzes electron transfer from ubiquinol to cytochrome c, linking this redox reaction to translocation of protons across the mitochondrial inner membrane, with protons being carried across the membrane as hydrogens on the quinol. In the process called Q cycle, 2 protons are consumed from the matrix, 4 protons are released into the intermembrane space and 2 electrons are passed to cytochrome c. The Rieske protein is a catalytic core subunit containing a [2Fe-2S] iron-sulfur cluster. It cycles between 2 conformational states during catalysis to transfer electrons from the quinol bound in the Q(0) site in cytochrome b to cytochrome c1. Incorporation of UQCRFS1 is the penultimate step in complex III assembly. Functionally, component of the ubiquinol-cytochrome c oxidoreductase (cytochrome b-c1 complex, complex III, CIII). UQCRFS1 undergoes proteolytic processing once it is incorporated in the complex III dimer. One of the fragments, called subunit 9, corresponds to its mitochondrial targeting sequence (MTS). The proteolytic processing is necessary for the correct insertion of UQCRFS1 in the complex III dimer, but the persistence of UQCRFS1-derived fragments may prevent newly imported UQCRFS1 to be processed and assembled into complex III and is detrimental for the complex III structure and function. The sequence is that of Cytochrome b-c1 complex subunit Rieske, mitochondrial (UQCRFS1) from Pongo pygmaeus (Bornean orangutan).